The primary structure comprises 107 residues: Nitrogenase-stabilizing/protective protein NifW (107 aa).

The protein belongs to the NifW family. As to quaternary structure, homotrimer; associates with NifD.

Functionally, may protect the nitrogenase Fe-Mo protein from oxidative damage. This Gloeothece citriformis (strain PCC 7424) (Cyanothece sp. (strain PCC 7424)) protein is Nitrogenase-stabilizing/protective protein NifW.